The primary structure comprises 456 residues: tRNA(Ile)-lysidine synthase (456 aa).

28 to 33 (SGGSDS) provides a ligand contact to ATP.

The protein belongs to the tRNA(Ile)-lysidine synthase family.

The protein localises to the cytoplasm. It carries out the reaction cytidine(34) in tRNA(Ile2) + L-lysine + ATP = lysidine(34) in tRNA(Ile2) + AMP + diphosphate + H(+). Its function is as follows. Ligates lysine onto the cytidine present at position 34 of the AUA codon-specific tRNA(Ile) that contains the anticodon CAU, in an ATP-dependent manner. Cytidine is converted to lysidine, thus changing the amino acid specificity of the tRNA from methionine to isoleucine. In Brucella anthropi (strain ATCC 49188 / DSM 6882 / CCUG 24695 / JCM 21032 / LMG 3331 / NBRC 15819 / NCTC 12168 / Alc 37) (Ochrobactrum anthropi), this protein is tRNA(Ile)-lysidine synthase.